Here is a 385-residue protein sequence, read N- to C-terminus: 8-amino-7-oxononanoate synthase (385 aa).

Position 21 (Arg-21) interacts with substrate. 108–109 serves as a coordination point for pyridoxal 5'-phosphate; sequence GF. Residue His-133 participates in substrate binding. Ser-179, His-207, and Thr-233 together coordinate pyridoxal 5'-phosphate. An N6-(pyridoxal phosphate)lysine modification is found at Lys-236. A substrate-binding site is contributed by Thr-352.

Belongs to the class-II pyridoxal-phosphate-dependent aminotransferase family. BioF subfamily. As to quaternary structure, homodimer. It depends on pyridoxal 5'-phosphate as a cofactor.

It catalyses the reaction 6-carboxyhexanoyl-[ACP] + L-alanine + H(+) = (8S)-8-amino-7-oxononanoate + holo-[ACP] + CO2. It participates in cofactor biosynthesis; biotin biosynthesis. In terms of biological role, catalyzes the decarboxylative condensation of pimeloyl-[acyl-carrier protein] and L-alanine to produce 8-amino-7-oxononanoate (AON), [acyl-carrier protein], and carbon dioxide. The protein is 8-amino-7-oxononanoate synthase of Klebsiella pneumoniae subsp. pneumoniae (strain ATCC 700721 / MGH 78578).